The chain runs to 217 residues: Adenylate kinase (217 aa).

10 to 15 (GGGKGT) contacts ATP. The segment at 30–59 (STGDMLRAAVASGSEVGKKAKAVMDAGQLV) is NMP. AMP is bound by residues Thr31, Arg36, 57 to 59 (QLV), 85 to 88 (GFPR), and Gln92. An LID region spans residues 126 to 164 (GRYTCAKCGAGYHDKFQLPQVAGKCDSCGGTEFARRPDD). Position 127 (Arg127) interacts with ATP. The Zn(2+) site is built by Cys130, Cys133, Cys150, and Cys153. The AMP site is built by Arg161 and Arg172. Met200 contacts ATP.

It belongs to the adenylate kinase family. In terms of assembly, monomer.

Its subcellular location is the cytoplasm. It catalyses the reaction AMP + ATP = 2 ADP. It participates in purine metabolism; AMP biosynthesis via salvage pathway; AMP from ADP: step 1/1. In terms of biological role, catalyzes the reversible transfer of the terminal phosphate group between ATP and AMP. Plays an important role in cellular energy homeostasis and in adenine nucleotide metabolism. This Paramagnetospirillum magneticum (strain ATCC 700264 / AMB-1) (Magnetospirillum magneticum) protein is Adenylate kinase.